A 1126-amino-acid polypeptide reads, in one-letter code: [F-actin]-monooxygenase mical2 (1126 aa).

Residues 2–494 (GENGDDKHGR…KHLFITNELQ (493 aa)) are monooxygenase domain. FAD contacts are provided by residues Cys97, 116–118 (EKR), 123–125 (RNN), Phe183, Tyr299, and Asp399. A Calponin-homology (CH) domain is found at 516–619 (DVRPNKLLIW…MVLYLSKFYE (104 aa)). The short motif at 659–680 (RKRVPKDEKTSDDSDLNKRRKT) is the Nuclear localization signal element. 2 disordered regions span residues 748 to 830 (AVTA…SLSS) and 892 to 935 (PSLG…SGMS). Residues 792–803 (VRPPVQPRPGPA) show a composition bias toward pro residues. A compositionally biased stretch (basic and acidic residues) spans 805–824 (PTRELRVVERAQSHPDDLGR). Residues 918-932 (SSSDSSPSSAPSRKS) show a composition bias toward low complexity. The region spanning 1001–1063 (DTCYFCKRRV…QPHFMHSVTK (63 aa)) is the LIM zinc-binding domain. Zn(2+) contacts are provided by Cys1003, Cys1006, His1024, Cys1027, Cys1030, Cys1033, Cys1053, and His1056.

The protein belongs to the Mical family. Requires FAD as cofactor.

Its subcellular location is the nucleus. It is found in the cytoplasm. It catalyses the reaction L-methionyl-[F-actin] + NADPH + O2 + H(+) = L-methionyl-(R)-S-oxide-[F-actin] + NADP(+) + H2O. Functionally, nuclear monooxygenase that promotes depolymerization of F-actin by mediating oxidation of specific methionine residues on actin and regulates the srf signaling. Acts by modifying nuclear actin subunits through the addition of oxygen to form methionine-sulfoxide, leading to promote actin filament severing and prevent repolymerization. Acts as a key regulator of the srf signaling pathway elicited by nerve growth factor and serum: mediates oxidation and subsequent depolymerization of nuclear actin, leading to increase mkl1/mrtf-a presence in the nucleus and promote srf:mkl1/mrtf-a-dependent gene transcription. The chain is [F-actin]-monooxygenase mical2 from Xenopus tropicalis (Western clawed frog).